We begin with the raw amino-acid sequence, 192 residues long: CASP-like protein 4C1 (192 aa).

Positions 1–11 are enriched in polar residues; sequence MRSPQSLRNGE. The segment at 1–23 is disordered; the sequence is MRSPQSLRNGETPSPSPRPPRFP. Over 1–40 the chain is Cytoplasmic; it reads MRSPQSLRNGETPSPSPRPPRFPTPHFHSTVSLQKLKRFN. A compositionally biased stretch (pro residues) spans 14–23; sequence SPSPRPPRFP. A helical transmembrane segment spans residues 41-61; it reads LLILVFRLSTFCFSLASSVFM. Residues 62–75 are Extracellular-facing; that stretch reads LTNPTWYHFDAFRY. Residues 76–96 traverse the membrane as a helical segment; it reads VFAANAIVAIYSLFEMAASVW. Residues 97–107 lie on the Cytoplasmic side of the membrane; that stretch reads EISRGNTLFPE. The helical transmembrane segment at 108–128 threads the bilayer; sequence ILQVWFDFGHDQVFAYLLLSA. At 129–156 the chain is on the extracellular side; that stretch reads DSAATALAKTLKGGDTCAASNAFCVQSY. Residues 157–177 traverse the membrane as a helical segment; that stretch reads IAIALGFAGFLFLGLSSLLSG. Residues 178-192 lie on the Cytoplasmic side of the membrane; the sequence is FRVVCFLINGSRFYV.

It belongs to the Casparian strip membrane proteins (CASP) family. In terms of assembly, homodimer and heterodimers.

The protein localises to the cell membrane. This is CASP-like protein 4C1 from Ricinus communis (Castor bean).